The following is a 141-amino-acid chain: MLGAEETALVRGVWQKVESAKDEMGEETLTRMFLVYPKTKTYFPHFDLHHGSEQIRNHGKKVVTALGNAIQNLDNLRQTLADLSNLHAYNLRVDPVNFKLLAQCFQVVLAVHLGQEYTPEVHVAFDKFLTAVAAVLAEKYR.

Residues 1-141 (MLGAEETALV…VAAVLAEKYR (141 aa)) enclose the Globin domain. 2 residues coordinate heme b: H58 and H87.

This sequence belongs to the globin family. As to quaternary structure, heterotetramer of two alpha-D chains and two beta chains. Red blood cells.

Involved in oxygen transport from the lung to the various peripheral tissues. This chain is Hemoglobin subunit alpha-D (HBAD), found in Phalacrocorax carbo (Great cormorant).